Here is a 90-residue protein sequence, read N- to C-terminus: Phosphoribosyl-ATP pyrophosphatase (90 aa).

This sequence belongs to the PRA-PH family.

It localises to the cytoplasm. The catalysed reaction is 1-(5-phospho-beta-D-ribosyl)-ATP + H2O = 1-(5-phospho-beta-D-ribosyl)-5'-AMP + diphosphate + H(+). Its pathway is amino-acid biosynthesis; L-histidine biosynthesis; L-histidine from 5-phospho-alpha-D-ribose 1-diphosphate: step 2/9. In Streptomyces avermitilis (strain ATCC 31267 / DSM 46492 / JCM 5070 / NBRC 14893 / NCIMB 12804 / NRRL 8165 / MA-4680), this protein is Phosphoribosyl-ATP pyrophosphatase.